Consider the following 213-residue polypeptide: ATP-dependent Clp protease proteolytic subunit (213 aa).

Catalysis depends on S114, which acts as the Nucleophile. H139 is an active-site residue.

The protein belongs to the peptidase S14 family. In terms of assembly, fourteen ClpP subunits assemble into 2 heptameric rings which stack back to back to give a disk-like structure with a central cavity, resembling the structure of eukaryotic proteasomes.

It localises to the cytoplasm. The catalysed reaction is Hydrolysis of proteins to small peptides in the presence of ATP and magnesium. alpha-casein is the usual test substrate. In the absence of ATP, only oligopeptides shorter than five residues are hydrolyzed (such as succinyl-Leu-Tyr-|-NHMec, and Leu-Tyr-Leu-|-Tyr-Trp, in which cleavage of the -Tyr-|-Leu- and -Tyr-|-Trp bonds also occurs).. Its function is as follows. Cleaves peptides in various proteins in a process that requires ATP hydrolysis. Has a chymotrypsin-like activity. Plays a major role in the degradation of misfolded proteins. This Pseudomonas putida (strain GB-1) protein is ATP-dependent Clp protease proteolytic subunit.